We begin with the raw amino-acid sequence, 365 residues long: Methionine import ATP-binding protein MetN (365 aa).

Residues isoleucine 17–leucine 256 form the ABC transporter domain. Glycine 53–serine 60 lines the ATP pocket. Residues serine 346–histidine 365 are disordered.

The protein belongs to the ABC transporter superfamily. Methionine importer (TC 3.A.1.24) family. The complex is composed of two ATP-binding proteins (MetN), two transmembrane proteins (MetI) and a solute-binding protein (MetQ).

It localises to the cell membrane. The catalysed reaction is L-methionine(out) + ATP + H2O = L-methionine(in) + ADP + phosphate + H(+). The enzyme catalyses D-methionine(out) + ATP + H2O = D-methionine(in) + ADP + phosphate + H(+). Functionally, part of the ABC transporter complex MetNIQ involved in methionine import. Responsible for energy coupling to the transport system. The protein is Methionine import ATP-binding protein MetN of Cutibacterium acnes (strain DSM 16379 / KPA171202) (Propionibacterium acnes).